The chain runs to 527 residues: Bifunctional dihydrofolate reductase-thymidylate synthase (527 aa).

The region spanning 28–238 (PFSVVVASDE…KKYQFEKLVP (211 aa)) is the DHFR domain. Position 32 (V32) interacts with substrate. NADP(+) is bound by residues A34 and 40–46 (GIGDGGT). A substrate-binding site is contributed by D54. NADP(+)-binding positions include 84–86 (RKT) and 105–108 (LSRS). Substrate-binding residues include I160, Y166, and T184. 161-168 (GGGTIYKQ) lines the NADP(+) pocket. Residues 243–527 (EEQYLNLVGR…YPVISMEMAV (285 aa)) form a thymidylate synthase region. DUMP is bound at residue R263. The active site involves C409. Residues H410, 428–432 (QRSCD), N440, and 470–472 (HVY) contribute to the dUMP site.

It in the N-terminal section; belongs to the dihydrofolate reductase family. In the C-terminal section; belongs to the thymidylate synthase family. In terms of assembly, homodimer.

The catalysed reaction is dUMP + (6R)-5,10-methylene-5,6,7,8-tetrahydrofolate = 7,8-dihydrofolate + dTMP. It carries out the reaction (6S)-5,6,7,8-tetrahydrofolate + NADP(+) = 7,8-dihydrofolate + NADPH + H(+). Its pathway is pyrimidine metabolism; dTTP biosynthesis. It participates in cofactor biosynthesis; tetrahydrofolate biosynthesis; 5,6,7,8-tetrahydrofolate from 7,8-dihydrofolate: step 1/1. Functionally, bifunctional enzyme. Involved in de novo dTMP biosynthesis. Key enzyme in folate metabolism. Catalyzes an essential reaction for de novo glycine and purine synthesis, DNA precursor synthesis, and for the conversion of dUMP to dTMP. The chain is Bifunctional dihydrofolate reductase-thymidylate synthase from Trypanosoma brucei brucei.